The chain runs to 79 residues: Putative defensin-like protein 309 (79 aa).

Positions 1 to 19 (MKILAFFIFVLLIFSCSSS) are cleaved as a signal peptide. 3 cysteine pairs are disulfide-bonded: cysteine 31-cysteine 50, cysteine 37-cysteine 55, and cysteine 41-cysteine 57.

This sequence belongs to the DEFL family.

It localises to the secreted. This chain is Putative defensin-like protein 309, found in Arabidopsis thaliana (Mouse-ear cress).